We begin with the raw amino-acid sequence, 1111 residues long: MSVSGDDSDDYFDHEIDDVIVPGTPDAVKSAQTDNRPAKRRRLDAGVFDESDISIDQGDGEDEFQSPDRRSVNAVQSEDVERTSKYKVFVPKRKNFQENIFVTQLTQPPSPPEMIRGPRWKKPGPEPLAPKPTTTTVDASHQPDQYYDEDKEIEAAIAASLRSFEEENGGNIPSTASRSTPALTAVAPSAALKEAAADVPFNLDDIPDDAFDSDLSLSPPRTTSQATRGPPVQSQFRTNRPLGLRQSTLFDMAARNSDIPSQRGEQILSPPEKNEPPTHHKLNEEAINTWVYPTNLGKTRDYQFNIAQRGLFHNLLVALPTGLGKTFIAATIMLNWYRWTKSAQIIFVAPTKPLVAQQISACFQVAGIPRSQTTMLTGEAAPGIRAEEWKSKRVFFMTPQTLVNDLKSGIADPKRIVLLVVDEAHRATGGYAYVEVVKFLKRYNKSFRVLALTATPGSTVESVQAVIDGLGIAKVEIRTEQSLDIREYVHARDTEVQTFKNSDEMVLCMELFTRTLQPLVDQLRNLNAYWGRDPMALTAFGLTKARQQWMGSDAGRNANLGLKGKVNAIFTVLASLAHAIDLLKYHGITPFYRHLLHFQSNTDGQKGGKYQRQIVQDESFKKLMNHLQPWTKNPEFIGHPKLEYLKQVVLNHFMDRGEGTAANGDQSQSATRIMIFVHFRDSAEEVVRVLKRYEPLIRPHVFVGQSSAKGSEGMDQKTQLSIVQKFKKGTYNTIVATSIGEEGLDIGEVDLIVCYDSSASPIRMLQRMGRTGRKRAGNIVLLLMQGKEEESYIKAKDNYEKMQQMIASGTRFTFHDDTSPRILPPGVRPVAEKRQIDIPVENTQADLPEPRKRARPPKRPPKKFHMPDDVETGFAKASSLTGKVTKKAETKKAVRKPTPEPVEVPALEEVLLTPGEQQDLERRYCHIGGTSPEFIRNPRVDAYPRLQSVPRPTKAIKHGSLTSRMIGTLQKMSKVSVDCERRYRKVLALESSKEIVDSVLSREPGSPAQNSGRLGKKPHAFKRPSATSRPNNVHVREDENEDNCTPELLSPEKLMSSFLEPHTERPPYSSQRSQDAFELDFPDVETLLNRSAERHVSRKRNRFVLDDDTEE.

Composition is skewed to acidic residues over residues 1–18 (MSVS…EIDD) and 47–65 (VFDE…DEFQ). 4 disordered regions span residues 1 to 81 (MSVS…EDVE), 101 to 144 (FVTQ…HQPD), 210 to 240 (AFDS…RTNR), and 259 to 280 (IPSQ…PTHH). Polar residues-rich tracts occupy residues 132–143 (PTTTTVDASHQP) and 215–238 (LSLS…QFRT). A Helicase ATP-binding domain is found at 306-474 (IAQRGLFHNL…AVIDGLGIAK (169 aa)). 319–326 (LPTGLGKT) lines the ATP pocket. A DEAH box motif is present at residues 422–425 (DEAH). The region spanning 644-818 (YLKQVVLNHF…GTRFTFHDDT (175 aa)) is the Helicase C-terminal domain. Disordered stretches follow at residues 836-898 (IDIP…RKPT), 998-1047 (SVLS…CTPE), and 1092-1111 (AERH…DTEE). Residues 852–864 (KRARPPKRPPKKF) show a composition bias toward basic residues.

It belongs to the DEAD box helicase family. DEAH subfamily. FANCM sub-subfamily. As to quaternary structure, interacts with the MHF histone-fold complex to form the FANCM-MHF complex.

Its subcellular location is the nucleus. The catalysed reaction is ATP + H2O = ADP + phosphate + H(+). ATP-dependent DNA helicase involved in DNA damage repair by homologous recombination and in genome maintenance. Capable of unwinding D-loops. Plays a role in limiting crossover recombinants during mitotic DNA double-strand break (DSB) repair. Component of a FANCM-MHF complex which promotes gene conversion at blocked replication forks, probably by reversal of the stalled fork. This chain is ATP-dependent DNA helicase mph1, found in Neosartorya fischeri (strain ATCC 1020 / DSM 3700 / CBS 544.65 / FGSC A1164 / JCM 1740 / NRRL 181 / WB 181) (Aspergillus fischerianus).